Reading from the N-terminus, the 404-residue chain is Pyruvate-flavodoxin oxidoreductase (404 aa).

Belongs to the pyruvate:ferredoxin/flavodoxin oxidoreductase family.

The catalysed reaction is oxidized [flavodoxin] + pyruvate + CoA + 2 H(+) = reduced [flavodoxin] + acetyl-CoA + CO2. In terms of biological role, oxidoreductase required for the transfer of electrons from pyruvate to flavodoxin, which reduces nitrogenase. In Nostoc sp. (strain ATCC 29151 / PCC 7119) (Anabaena sp.), this protein is Pyruvate-flavodoxin oxidoreductase (nifJ).